A 208-amino-acid chain; its full sequence is Ribonuclease HII (208 aa).

The RNase H type-2 domain occupies 18-208 (GFYAGVDEVG…RPVKERLEAC (191 aa)). The a divalent metal cation site is built by D24, E25, and D116.

Belongs to the RNase HII family. It depends on Mn(2+) as a cofactor. Mg(2+) is required as a cofactor.

Its subcellular location is the cytoplasm. The enzyme catalyses Endonucleolytic cleavage to 5'-phosphomonoester.. Endonuclease that specifically degrades the RNA of RNA-DNA hybrids. The protein is Ribonuclease HII of Shewanella loihica (strain ATCC BAA-1088 / PV-4).